Here is a 254-residue protein sequence, read N- to C-terminus: MENEREKQVYLAKLSEQTERYDEMVEAMKKVAQLDVELTVEERNLVSVGYKNVIGARRASWRILSSIEQKEESKGNDENVKRLKNYRKRVEDELAKVCNDILSVIDKHLIPSSNAVESTVFFYKMKGDYYRYLAEFSSGAERKEAADQSLEAYKAAVAAAENGLAPTHPVRLGLALNFSVFYYEILNSPESACQLAKQAFDDAIAELDSLNEESYKDSTLIMQLLRDNLTLWTSDLNEEGDERTKGADEPQDEN.

Phosphoserine occurs at positions 65 and 188.

The protein belongs to the 14-3-3 family. In terms of assembly, interacts with DREB1A and DREB1B in the nucleus. Interacts with CINV1.

The protein localises to the nucleus. Its subcellular location is the cytoplasm. Functionally, is associated with a DNA binding complex that binds to the G box, a well-characterized cis-acting DNA regulatory element found in plant genes. In Arabidopsis thaliana (Mouse-ear cress), this protein is 14-3-3-like protein GF14 epsilon (GRF10).